Consider the following 339-residue polypeptide: Ornithine carbamoyltransferase (339 aa).

Residues 56-59 (STRT), arginine 107, and 134-137 (HPTQ) contribute to the carbamoyl phosphate site. L-ornithine contacts are provided by residues asparagine 168, aspartate 232, and 236-237 (SM). Residues 274–275 (CL) and arginine 320 each bind carbamoyl phosphate.

This sequence belongs to the aspartate/ornithine carbamoyltransferase superfamily. OTCase family.

It localises to the cytoplasm. The enzyme catalyses carbamoyl phosphate + L-ornithine = L-citrulline + phosphate + H(+). It functions in the pathway amino-acid biosynthesis; L-arginine biosynthesis; L-arginine from L-ornithine and carbamoyl phosphate: step 1/3. In terms of biological role, reversibly catalyzes the transfer of the carbamoyl group from carbamoyl phosphate (CP) to the N(epsilon) atom of ornithine (ORN) to produce L-citrulline. The protein is Ornithine carbamoyltransferase of Buchnera aphidicola subsp. Baizongia pistaciae (strain Bp).